Reading from the N-terminus, the 708-residue chain is Kin of IRRE-like protein 2 (708 aa).

Positions 1–20 are cleaved as a signal peptide; the sequence is MLRMRVPALLVLLFCFRGRA. Residues 21-510 lie on the Extracellular side of the membrane; the sequence is GPSPHFLQQP…GRRDLLPTVR (490 aa). Ig-like C2-type domains lie at 24-118, 123-222, 227-307, 312-394, and 398-501; these read PHFL…AQLH, PEAP…ITLS, PEVT…TALD, PILQ…ARLT, and PPVV…ASLG. Residues C45 and C103 are joined by a disulfide bond. An N-linked (GlcNAc...) asparagine glycan is attached at N143. Cystine bridges form between C146/C204 and C248/C291. Residues 149 to 151 carry the Cell attachment site motif; that stretch reads RGD. N301 carries an N-linked (GlcNAc...) asparagine glycan. 2 disulfides stabilise this stretch: C333–C375 and C419–C485. N484 carries N-linked (GlcNAc...) asparagine glycosylation. The chain crosses the membrane as a helical span at residues 511-531; sequence IVAGVAAATTTLLMVITGVAL. The Cytoplasmic segment spans residues 532 to 708; the sequence is CCWRHSKASA…PSHPRLQTHV (177 aa). Residues 545–601 are disordered; sequence EQKNLMRIPGSSDGSSSRGPEEEETGSREDRGPIVHTDHSDLVLEEEGTLETKDPTN. Residues 553 to 562 are compositionally biased toward low complexity; it reads PGSSDGSSSR. Over residues 569-586 the composition is skewed to basic and acidic residues; that stretch reads TGSREDRGPIVHTDHSDL. S571 carries the post-translational modification Phosphoserine. Y603, Y604, and Y661 each carry phosphotyrosine. Residues 684-708 form a disordered region; the sequence is LAPGTPPFPYAAFPTPSHPRLQTHV.

Belongs to the immunoglobulin superfamily. Homodimer. Interacts with NPHS2/podocin (via the C-terminus). Interacts with NPHS1 (via the Ig-like domains). Interacts with FYN. In terms of processing, N-glycosylated. The extracellular domain is cleaved leading to the generation of a soluble fragment and a membrane-bound C-terminal fragment, which is further cleaved by gamma-secretase. In terms of tissue distribution, highly expressed in beta-cells of the pancreatic islets.

The protein resides in the cell membrane. In terms of biological role, may regulate basal insulin secretion. This Homo sapiens (Human) protein is Kin of IRRE-like protein 2 (KIRREL2).